Consider the following 253-residue polypeptide: Imidazole glycerol phosphate synthase subunit HisF (253 aa).

Catalysis depends on residues D11 and D130.

This sequence belongs to the HisA/HisF family. Heterodimer of HisH and HisF.

It localises to the cytoplasm. It catalyses the reaction 5-[(5-phospho-1-deoxy-D-ribulos-1-ylimino)methylamino]-1-(5-phospho-beta-D-ribosyl)imidazole-4-carboxamide + L-glutamine = D-erythro-1-(imidazol-4-yl)glycerol 3-phosphate + 5-amino-1-(5-phospho-beta-D-ribosyl)imidazole-4-carboxamide + L-glutamate + H(+). It functions in the pathway amino-acid biosynthesis; L-histidine biosynthesis; L-histidine from 5-phospho-alpha-D-ribose 1-diphosphate: step 5/9. IGPS catalyzes the conversion of PRFAR and glutamine to IGP, AICAR and glutamate. The HisF subunit catalyzes the cyclization activity that produces IGP and AICAR from PRFAR using the ammonia provided by the HisH subunit. The protein is Imidazole glycerol phosphate synthase subunit HisF of Cereibacter sphaeroides (strain ATCC 17025 / ATH 2.4.3) (Rhodobacter sphaeroides).